The chain runs to 247 residues: Cell division protein ZapD (247 aa).

This sequence belongs to the ZapD family. As to quaternary structure, interacts with FtsZ.

Its subcellular location is the cytoplasm. Cell division factor that enhances FtsZ-ring assembly. Directly interacts with FtsZ and promotes bundling of FtsZ protofilaments, with a reduction in FtsZ GTPase activity. In Cronobacter sakazakii (strain ATCC BAA-894) (Enterobacter sakazakii), this protein is Cell division protein ZapD.